A 52-amino-acid polypeptide reads, in one-letter code: Large ribosomal subunit protein eL40 (52 aa).

Positions 20, 23, 34, and 39 each coordinate Zn(2+).

The protein belongs to the eukaryotic ribosomal protein eL40 family. Component of the large ribosomal subunit. Mature ribosomes consist of a small (40S) and a large (60S) subunit. The 40S subunit contains about 32 different proteins and 1 molecule of RNA (18S). The 60S subunit contains 45 different proteins and 3 molecules of RNA (25S, 5.8S and 5S). Zn(2+) is required as a cofactor.

The protein resides in the cytoplasm. Functionally, component of the ribosome, a large ribonucleoprotein complex responsible for the synthesis of proteins in the cell. The small ribosomal subunit (SSU) binds messenger RNAs (mRNAs) and translates the encoded message by selecting cognate aminoacyl-transfer RNA (tRNA) molecules. The large subunit (LSU) contains the ribosomal catalytic site termed the peptidyl transferase center (PTC), which catalyzes the formation of peptide bonds, thereby polymerizing the amino acids delivered by tRNAs into a polypeptide chain. The nascent polypeptides leave the ribosome through a tunnel in the LSU and interact with protein factors that function in enzymatic processing, targeting, and the membrane insertion of nascent chains at the exit of the ribosomal tunnel. The polypeptide is Large ribosomal subunit protein eL40 (Candida albicans (strain SC5314 / ATCC MYA-2876) (Yeast)).